The following is a 330-amino-acid chain: Carbonic anhydrase (330 aa).

A chloroplast transit peptide-like region spans residues 1-109 (MSTASAFATN…AAARIDQITA (109 aa)).

Belongs to the beta-class carbonic anhydrase family.

Its subcellular location is the cytoplasm. The enzyme catalyses hydrogencarbonate + H(+) = CO2 + H2O. Its function is as follows. Reversible hydration of carbon dioxide. In Flaveria brownii (Brown's yellowtops), this protein is Carbonic anhydrase.